A 307-amino-acid chain; its full sequence is Potassium channel subfamily K member 7 (307 aa).

Residues 1 to 10 are Cytoplasmic-facing; the sequence is MGGLRPWSRY. The helical transmembrane segment at 11 to 31 threads the bilayer; it reads GLLVVAHLLALGLGAVVFQAL. N-linked (GlcNAc...) asparagine glycosylation is present at asparagine 83. The segment at residues 92–119 is an intramembrane region (pore-forming); it reads LPSALLFAASILTTTGYGHMAPLSPGGK. A helical transmembrane segment spans residues 120-140; it reads AFCMVYAALGLPASLALVATL. The Cytoplasmic portion of the chain corresponds to 141 to 170; it reads RHCLLPVLSRPRAWVAVHWQLSPARAALLQ. Residues 171–191 form a helical membrane-spanning segment; the sequence is AVALGLLVASSFVLLPALVLW. Residues 199–227 constitute an intramembrane region (pore-forming); that stretch reads LLGAVYFCFSSLSTIGLEDLLPGRGRSLH. The helical transmembrane segment at 233–253 threads the bilayer; the sequence is LGQLALLGYLLLGLLAMLLAV. Residues 254–307 lie on the Cytoplasmic side of the membrane; the sequence is ETFSELPQVRAMGKFFRPSGPVTAEDQGGILGQDELALSTLPPAAPASGQAPAC.

Belongs to the two pore domain potassium channel (TC 1.A.1.8) family. Homodimer.

The protein localises to the membrane. In terms of biological role, probable potassium channel subunit. No channel activity observed in vitro as protein remains in the endoplasmic reticulum. May need to associate with an as yet unknown partner in order to reach the plasma membrane. This is Potassium channel subfamily K member 7 (KCNK7) from Homo sapiens (Human).